A 504-amino-acid chain; its full sequence is Pentatricopeptide repeat-containing protein At5g16640, mitochondrial (504 aa).

The N-terminal 43 residues, 1–43, are a transit peptide targeting the mitochondrion; that stretch reads MRRSISSKAKSFLHRNLLYSGNSGTSPSSSFSICGFCFSRRAY. 13 PPR repeats span residues 45-79, 80-114, 115-149, 150-184, 185-219, 220-254, 255-289, 290-324, 325-359, 360-394, 395-429, 430-464, and 465-499; these read NGSD…RPLP, SIAD…GIPH, NLCT…GHEP, SIVT…GYKP, NVVI…GIGP, DVVT…EIYP, DVFT…SLDP, DIVT…GCFP, DVVT…GVVR, NTVT…GVHP, NIIT…GMDA, DIVT…GLMP, and DIWT…GILP.

The protein belongs to the PPR family. P subfamily.

The protein resides in the mitochondrion. In Arabidopsis thaliana (Mouse-ear cress), this protein is Pentatricopeptide repeat-containing protein At5g16640, mitochondrial.